A 277-amino-acid chain; its full sequence is MQHESPTSGMNMSALRRHKQRLDLADESVAIEVPGLNLFYGDKQALFDIALNIPKQKVTSFIGPSGCGKSTLLRCFNRMNDLVDGCRVEGAINLYGHNIYTKGEEVAELRRRVGMVFQKPNPFPKTIYENVVYGLRIQGINKKRVLDEAVEWALKAAALWDEVKDRLHESALGLSGGQQQRLVIARTIAVEPEVLLLDEPCSALDPISTLKVEELIYELKSKYTIVIVTHNMQQAARVSDYTAFMYMGKLVEFGDTDTLFTNPAKKQTEDYITGRYG.

An ABC transporter domain is found at 31 to 272; it reads IEVPGLNLFY…PAKKQTEDYI (242 aa). 63–70 is an ATP binding site; that stretch reads GPSGCGKS.

It belongs to the ABC transporter superfamily. Phosphate importer (TC 3.A.1.7) family. In terms of assembly, the complex is composed of two ATP-binding proteins (PstB), two transmembrane proteins (PstC and PstA) and a solute-binding protein (PstS).

It localises to the cell inner membrane. The enzyme catalyses phosphate(out) + ATP + H2O = ADP + 2 phosphate(in) + H(+). Functionally, part of the ABC transporter complex PstSACB involved in phosphate import. Responsible for energy coupling to the transport system. This is Phosphate import ATP-binding protein PstB 2 from Pseudomonas syringae pv. syringae (strain B728a).